Reading from the N-terminus, the 520-residue chain is uncharacterized protein (520 aa).

Helical transmembrane passes span 38–58 (VVLI…IPGG), 84–104 (IAIY…GIFN), 105–125 (IGIS…ILKV), 138–158 (IITV…VATL), 167–187 (VVSA…LVET), 220–240 (FGWL…AVVL), 271–291 (FLSF…VYTA), 318–338 (IAIG…SVLI), and 355–375 (ASLV…MVYF).

It is found in the cell membrane. This is an uncharacterized protein from Mycoplasma genitalium (strain ATCC 33530 / DSM 19775 / NCTC 10195 / G37) (Mycoplasmoides genitalium).